The primary structure comprises 517 residues: Steroid 17-alpha-hydroxylase/17,20 lyase (517 aa).

A heme-binding site is contributed by Cys-451.

Belongs to the cytochrome P450 family. Heme is required as a cofactor.

It localises to the membrane. The enzyme catalyses a C21-steroid + reduced [NADPH--hemoprotein reductase] + O2 = a 17alpha-hydroxy-C21-steroid + oxidized [NADPH--hemoprotein reductase] + H2O + H(+). It carries out the reaction 17alpha-hydroxyprogesterone + reduced [NADPH--hemoprotein reductase] + O2 = androst-4-ene-3,17-dione + acetate + oxidized [NADPH--hemoprotein reductase] + H2O + 2 H(+). The catalysed reaction is 17alpha-hydroxypregnenolone + reduced [NADPH--hemoprotein reductase] + O2 = 3beta-hydroxyandrost-5-en-17-one + acetate + oxidized [NADPH--hemoprotein reductase] + H2O + 2 H(+). Its pathway is lipid metabolism; steroid biosynthesis. Its function is as follows. Conversion of pregnenolone and progesterone to their 17-alpha-hydroxylated products and subsequently to dehydroepiandrosterone (DHEA) and androstenedione. Catalyzes both the 17-alpha-hydroxylation and the 17,20-lyase reaction. In Oryzias latipes (Japanese rice fish), this protein is Steroid 17-alpha-hydroxylase/17,20 lyase (cyp17a1).